The following is a 376-amino-acid chain: MFPRPLTPLAAPNGAEPLGRALRRAPLGRARAGLGGPPLLLPSMLMFAVIVASSGLLLMIERGILAEMKPLPLHPPGREGTAWRGKAPKPGGLSLRAGDADLQVRQDVRNRTLRAVCGQPGMPRDPWDLPVGQRRTLLRHILVSDRYRFLYCYVPKVACSNWKRVMKVLAGVLDSVDVRLKMDHRSDLVFLADLRPEEIRYRLQHYFKFLFVREPLERLLSAYRNKFGEIREYQQRYGAEIVRRYRAGAGPSPAGDDVTFPEFLRYLVDEDPERMNEHWMPVYHLCQPCAVHYDFVGSYERLEADANQVLEWVRAPPHVRFPARQAWYRPASPESLHYHLCSAPRALLQDVLPKYILDFSLFAYPLPNVTKEACQQ.

The Cytoplasmic portion of the chain corresponds to 1-39; the sequence is MFPRPLTPLAAPNGAEPLGRALRRAPLGRARAGLGGPPL. The chain crosses the membrane as a helical; Signal-anchor for type II membrane protein span at residues 40-60; that stretch reads LLPSMLMFAVIVASSGLLLMI. Over 61-376 the chain is Lumenal; the sequence is ERGILAEMKP…PNVTKEACQQ (316 aa). N110 carries an N-linked (GlcNAc...) asparagine glycan. 3'-phosphoadenylyl sulfate is bound by residues 155–161 and 213–221; these read PKVACSN and REPLERLLS. N-linked (GlcNAc...) asparagine glycosylation is present at N368.

The protein belongs to the sulfotransferase 2 family. In terms of tissue distribution, widely expressed. Expressed at high level in pituitary gland, placenta, uterus and thyroid.

The protein resides in the golgi apparatus membrane. It carries out the reaction dermatan + n 3'-phosphoadenylyl sulfate = dermatan 4'-sulfate + n adenosine 3',5'-bisphosphate + n H(+). Catalyzes the transfer of sulfate to position 4 of the N-acetylgalactosamine (GalNAc) residue of dermatan sulfate. Plays a pivotal role in the formation of 4-0-sulfated IdoA blocks in dermatan sulfate. Transfers sulfate to the C-4 hydroxyl of beta1,4-linked GalNAc that is substituted with an alpha-linked iduronic acid (IdoUA) at the C-3 hydroxyl. Transfers sulfate more efficiently to GalNAc residues in -IdoUA-GalNAc-IdoUA- than in -GlcUA-GalNAc-GlcUA-sequences. Has preference for partially desulfated dermatan sulfate. Addition of sulfate to GalNAc may occur immediately after epimerization of GlcUA to IdoUA. Appears to have an important role in the formation of the cerebellar neural network during postnatal brain development. The protein is Carbohydrate sulfotransferase 14 (CHST14) of Homo sapiens (Human).